A 1012-amino-acid polypeptide reads, in one-letter code: DNA polymerase catalytic subunit (1012 aa).

This sequence belongs to the DNA polymerase type-B family.

Its subcellular location is the host nucleus. The catalysed reaction is DNA(n) + a 2'-deoxyribonucleoside 5'-triphosphate = DNA(n+1) + diphosphate. In Human herpesvirus 6A (strain Uganda-1102) (HHV-6 variant A), this protein is DNA polymerase catalytic subunit (U38).